The primary structure comprises 568 residues: MNGEESFVEDCSVFVEIDPSGRYGRYDEILGKGASKTVYRAFDEYEGIEVAWNQVKLRNFTRNPEELEKFFREIHLLKTLNHQNIMKFYTSWVDTNNLSINFVTELFTSGTLRQYRLRHRRVNIRAVKQWCKQILKGLLYLHSRSPPIIHRDLKCDNIFINGNQGEVKIGDLGLAAILRKSHAVRCVGTPEFMAPEVYDEEYNELVDVYAFGMCVLEMVTFDYPYSECTHPAQIYKKVTSGKKPEAFYLVKDPEVREFVEKCLANVTCRLTALELLQDPFLQDDNMDGFVMRPIDYYNGYDETGVFLRHPLIDDPLYHDQFESSQICEIDLFANDDEDHVDISIKGKRNGDDGIFLRLRISDAEGRIRNIYFPFETAIDTAWSVAVEMVSELDITNQDVAKIAEMIDAEIAALVPDWKNDTESSQNVNNNKNNNTAGFCGECASNGYIQETVSSGEKSHHNHHEFDSSEDKSCSSVHGRFADMWGLRESYSDDGEKQSSRKVRSGRWSENEMRRELRWLKARHKIQLMKMRGQTICETPIEISLTPGTSVSLPLLYRAISLPVDAVDM.

A Protein kinase domain is found at 24–281; that stretch reads GRYDEILGKG…ALELLQDPFL (258 aa). ATP contacts are provided by residues 104–107 and Lys154; that span reads TELF. The Proton acceptor role is filled by Asp171. Residues 453-473 form a disordered region; that stretch reads SSGEKSHHNHHEFDSSEDKSC. Residues 463–472 are compositionally biased toward basic and acidic residues; the sequence is HEFDSSEDKS.

The protein belongs to the protein kinase superfamily. Ser/Thr protein kinase family. WNK subfamily. Autophosphorylated.

It catalyses the reaction L-seryl-[protein] + ATP = O-phospho-L-seryl-[protein] + ADP + H(+). The enzyme catalyses L-threonyl-[protein] + ATP = O-phospho-L-threonyl-[protein] + ADP + H(+). Regulates flowering time by modulating the photoperiod pathway. Possesses kinase activity in vitro. This Arabidopsis thaliana (Mouse-ear cress) protein is Serine/threonine-protein kinase WNK2 (WNK2).